A 667-amino-acid chain; its full sequence is Flavin-dependent halogenase malA (667 aa).

FAD contacts are provided by His-48, Glu-70, Ile-79, and Ser-82. Lys-108 is a catalytic residue. FAD is bound by residues Arg-144, Val-168, Asp-399, and Ile-412. Substrate is bound at residue Glu-494. Zn(2+) is bound by residues Cys-597, Cys-600, Cys-613, and Cys-616. Residues Thr-621 to Asn-646 are flexible region.

The protein belongs to the flavin-dependent halogenase family. It depends on Zn(2+) as a cofactor.

It carries out the reaction (+)-premalbrancheamide + 2 FAD + 2 chloride + 4 H(+) = (+)-malbrancheamide + 2 FADH2. It catalyses the reaction (+)-premalbrancheamide + FAD + chloride + 2 H(+) = (+)-malbrancheamide B + FADH2. The enzyme catalyses (+)-premalbrancheamide + FAD + chloride + 2 H(+) = (+)-isomalbrancheamide B + FADH2. The catalysed reaction is (+)-malbrancheamide B + FAD + chloride + 2 H(+) = (+)-malbrancheamide + FADH2. It carries out the reaction (+)-isomalbrancheamide B + FAD + chloride + 2 H(+) = (+)-malbrancheamide + FADH2. It catalyses the reaction (+)-premalbrancheamide + bromide + FAD + 2 H(+) = (+)-malbrancheamide C + FADH2. The enzyme catalyses (+)-premalbrancheamide + bromide + FAD + 2 H(+) = (+)-isomalbrancheamide C + FADH2. The catalysed reaction is (+)-malbrancheamide B + bromide + FAD + 2 H(+) = (+)-malbrancheamide D + FADH2. It carries out the reaction (+)-isomalbrancheamide B + bromide + FAD + 2 H(+) = (+)-isomalbrancheamide D + FADH2. It participates in alkaloid biosynthesis. Functionally, flavin-dependent halogenase; part of the gene cluster that mediates the biosynthesis of malbrancheamide, a dichlorinated fungal indole alkaloid that belongs to a family of natural products containing a characteristic bicyclo[2.2.2]diazaoctane core. The first step of malbrancheamide biosynthesis involves coupling of L-proline and L-tryptophan by malG, a bimodular NRPS, to produce L-Pro-L-Trp aldehyde through reductive offloading. This compound undergoes spontaneous cyclization and dehydration to give a dienamine which is reverse prenylated at C-2 by malE. The other prenyltransferase present in the cluster, malB, displays modest activity, suggesting that may be a redundant gene in the pathway. Subsequently, a [4+2] Diels-Alder cyclo-addition catalyzed by the bifunctional enzyme malC forms the characteristic bicyclo[2.2.2]diazaoctane ring of premalbrancheamid. Finally, the flavin-dependent halogenase malA catalyzes the iterative dichlorination of the indole ring of premalbrancheamide to yield C-9 monochlorinated malbrancheamide B, C-8 monochlorinated isomalbrancheamide B, and dichlorinated malbrancheamide. MalA is also able to brominate premalbrancheamide at C-9 to yield malbrancheamide C, and, to a lesser extend, at C-8 to yield isomalbrancheamide C. Finally, malA can brominate C-9 monochlorinated malbrancheamide B at C-8 to yield malbrancheamide D, or C-8 monochlorinated isomalbrancheamide B at C-9 to produce isomalbrancheamide D. The sequence is that of Flavin-dependent halogenase malA from Malbranchea aurantiaca.